Here is a 209-residue protein sequence, read N- to C-terminus: Pyrrolidone-carboxylate peptidase (209 aa).

Active-site residues include E79, C142, and H164.

The protein belongs to the peptidase C15 family. As to quaternary structure, homotetramer.

The protein localises to the cytoplasm. It catalyses the reaction Release of an N-terminal pyroglutamyl group from a polypeptide, the second amino acid generally not being Pro.. Its function is as follows. Removes 5-oxoproline from various penultimate amino acid residues except L-proline. The chain is Pyrrolidone-carboxylate peptidase from Saccharolobus islandicus (strain L.S.2.15 / Lassen #1) (Sulfolobus islandicus).